A 330-amino-acid polypeptide reads, in one-letter code: MQDRLFVSMEHPRALPETDLIKGAIVGAGAVGMAIAYSMLIQNTFDELVLVDIDRRKVEGEVMDLVHGIPFVEPSVVRAGTLADCRGVDVVVITAGARQREGETRLSLVQRNVEIFRGLIGEIMEHCPNAILLVVSNPVDVMTYVAMKLAGLPPSRVIGSGTVLDTARFRYLLAERLRVDPRSLHAYIIGEHGDSEVPVWSRANVAGAFLSEIEPAVGTPDDPAKMFEVFEHVKNAAYEIIERKGATSWAIGLATTQIVRAITRNQNRVLPVSVLMSGLHGIEEVCLAYPAVLNRQGIDRLVKFSLSPGEEEQLQRSARVMRQTLDGIQF.

NAD(+) contacts are provided by residues Val-31, Asp-52, Lys-57, and 96 to 97 (GA). Residues Gln-99, Arg-105, and 137–140 (NPVD) each bind substrate. Residues 135–137 (VSN) and Ser-160 each bind NAD(+). Residue 165–168 (DTAR) participates in substrate binding. Beta-D-fructose 1,6-bisphosphate-binding residues include Arg-170 and His-185. The Proton acceptor role is filled by His-192. Tyr-238 is modified (phosphotyrosine). Thr-247 contacts substrate.

Belongs to the LDH/MDH superfamily. LDH family. In terms of assembly, homotetramer.

It is found in the cytoplasm. The enzyme catalyses (S)-lactate + NAD(+) = pyruvate + NADH + H(+). Its pathway is fermentation; pyruvate fermentation to lactate; (S)-lactate from pyruvate: step 1/1. With respect to regulation, allosterically activated by fructose 1,6-bisphosphate (FBP). Catalyzes the conversion of lactate to pyruvate. The chain is L-lactate dehydrogenase from Gloeobacter violaceus (strain ATCC 29082 / PCC 7421).